A 377-amino-acid chain; its full sequence is Actin-related protein T2 (377 aa).

This sequence belongs to the actin family.

It is found in the cytoplasm. The protein resides in the cytoskeleton. This is Actin-related protein T2 (Actrt2) from Mus musculus (Mouse).